The sequence spans 458 residues: Neuronal acetylcholine receptor subunit beta-3 (458 aa).

Positions 1-21 (MLPDFMLVLIVLGIPSSATTG) are cleaved as a signal peptide. Residues 22-237 (FNSIAENEDA…VLRRLPLFYT (216 aa)) lie on the Extracellular side of the membrane. Residues asparagine 51, asparagine 138, and asparagine 166 are each glycosylated (N-linked (GlcNAc...) asparagine). Cysteine 153 and cysteine 167 are oxidised to a cystine. 3 consecutive transmembrane segments (helical) span residues 238-258 (LFLI…FYLP), 267-287 (LSTS…EIIP), and 300-320 (LLFI…VINV). Topologically, residues 321-428 (HHRSSSTYHP…WKFVAQVLDR (108 aa)) are cytoplasmic. Residues 429 to 449 (IFLWLFLIVSVTGSVLIFTPA) traverse the membrane as a helical segment.

It belongs to the ligand-gated ion channel (TC 1.A.9) family. Acetylcholine receptor (TC 1.A.9.1) subfamily. Beta-3/CHRNB3 sub-subfamily. As to quaternary structure, neuronal AChR seems to be composed of two different type of subunits: alpha and beta. CHRNB3/beta-3 subunit is only able to form functional nAChRs when co-assembled with another beta subunit. Participates in pentameric assemblies along with CHRNA4/alpha-4 and CHRNB2/beta-2 subunits and with CHRNA6/alpha-6 as well, forming stoichiometries such as (CHRNA3:CHRNB4)2:CHRNB3, (CHRNA4:CHRNB2)2:CHRNB3 or (CHRNA6:CHRNB2)2:CHRNB3.

It localises to the synaptic cell membrane. The protein localises to the cell membrane. It catalyses the reaction Ca(2+)(in) = Ca(2+)(out). It carries out the reaction K(+)(in) = K(+)(out). The enzyme catalyses Na(+)(in) = Na(+)(out). Its activity is regulated as follows. Activated by a myriad of ligands such as acetylcholine, cytisine, nicotine, choline and epibatidine. Component of neuronal acetylcholine receptors (nAChRs) that function as pentameric, ligand-gated cation channels with high calcium permeability among other activities. nAChRs are excitatory neurotrasnmitter receptors formed by a collection of nAChR subunits known to mediate synaptic transmission in the nervous system and the neuromuscular junction. Each nAchR subunit confers differential attributes to channel properties, including activation, deactivation and desensitization kinetics, pH sensitivity, cation permeability, and binding to allosteric modulators. Has an accessory rather than functional role and is only able to form functional nAChRs when co-assembled with another beta subunit. Participates in pentameric assemblies along with CHRNA3, CHRNA4, CHRNA6, CHRNB2 and CHRNB4. Modulates receptor assembly and increases receptor sensitivity to nicotine when associated with CHRNB2, CHRNA4 and/or CHRNA6 as well as CHRNA3 and CHRNB4. Seems to play a role in nicotine addiction. This is Neuronal acetylcholine receptor subunit beta-3 from Homo sapiens (Human).